A 480-amino-acid chain; its full sequence is Ribulose bisphosphate carboxylase large chain (480 aa).

The propeptide occupies 1–2; that stretch reads MS. N-acetylproline is present on Pro3. At Lys14 the chain carries N6,N6,N6-trimethyllysine. Asn123 and Thr173 together coordinate substrate. The active-site Proton acceptor is the Lys175. Substrate is bound at residue Lys177. Residues Lys201, Asp203, and Glu204 each contribute to the Mg(2+) site. An N6-carboxylysine modification is found at Lys201. His294 serves as the catalytic Proton acceptor. Arg295, His327, and Ser379 together coordinate substrate.

The protein belongs to the RuBisCO large chain family. Type I subfamily. In terms of assembly, heterohexadecamer of 8 large chains and 8 small chains; disulfide-linked. The disulfide link is formed within the large subunit homodimers. Mg(2+) is required as a cofactor. In terms of processing, the disulfide bond which can form in the large chain dimeric partners within the hexadecamer appears to be associated with oxidative stress and protein turnover.

The protein localises to the plastid. It is found in the chloroplast. It catalyses the reaction 2 (2R)-3-phosphoglycerate + 2 H(+) = D-ribulose 1,5-bisphosphate + CO2 + H2O. The enzyme catalyses D-ribulose 1,5-bisphosphate + O2 = 2-phosphoglycolate + (2R)-3-phosphoglycerate + 2 H(+). RuBisCO catalyzes two reactions: the carboxylation of D-ribulose 1,5-bisphosphate, the primary event in carbon dioxide fixation, as well as the oxidative fragmentation of the pentose substrate in the photorespiration process. Both reactions occur simultaneously and in competition at the same active site. The protein is Ribulose bisphosphate carboxylase large chain of Mollugo verticillata (Green carpetweed).